A 1316-amino-acid chain; its full sequence is DNA-directed RNA polymerase subunit beta' (1316 aa).

Zn(2+) is bound by residues cysteine 60, cysteine 62, cysteine 75, and cysteine 78. Positions 535, 537, and 539 each coordinate Mg(2+). The Zn(2+) site is built by cysteine 891, cysteine 968, cysteine 975, and cysteine 978.

This sequence belongs to the RNA polymerase beta' chain family. As to quaternary structure, the RNAP catalytic core consists of 2 alpha, 1 beta, 1 beta' and 1 omega subunit. When a sigma factor is associated with the core the holoenzyme is formed, which can initiate transcription. It depends on Mg(2+) as a cofactor. The cofactor is Zn(2+).

The catalysed reaction is RNA(n) + a ribonucleoside 5'-triphosphate = RNA(n+1) + diphosphate. Its function is as follows. DNA-dependent RNA polymerase catalyzes the transcription of DNA into RNA using the four ribonucleoside triphosphates as substrates. In Mycolicibacterium paratuberculosis (strain ATCC BAA-968 / K-10) (Mycobacterium paratuberculosis), this protein is DNA-directed RNA polymerase subunit beta'.